The sequence spans 227 residues: uncharacterized protein (227 aa).

The N-terminal stretch at 1–23 (MKKRFSLIMMTGLLFGLTSPAFA) is a signal peptide. The region spanning 36–227 (NVAVLLDASG…FTQQSLMLSK (192 aa)) is the VWFA domain.

This sequence to B.subtilis YwmD.

This is an uncharacterized protein from Bacillus subtilis (strain 168).